A 441-amino-acid polypeptide reads, in one-letter code: Zinc finger protein ZIC 3 (441 aa).

The C2H2-type 1; atypical zinc finger occupies 222–257; sequence LSCKWLEESTMNHPQKTCDRTFSSMHELVTHMTMEH. A C2H2-type 2; atypical zinc finger spans residues 266–293; sequence HICYWEECPRGGKSFKAKYKLVNHIRVH. 3 consecutive C2H2-type zinc fingers follow at residues 299-323, 329-353, and 359-381; these read FPCP…KRTH, FKCE…MHVH, and YICK…MKVH. The disordered stretch occupies residues 375-441; it reads RKHMKVHESQ…LPPNFNEWYV (67 aa). Residues 383–399 are compositionally biased toward low complexity; the sequence is SQGSDSSPAASSGYESA. Residues 406–429 are compositionally biased toward polar residues; sequence SANSEEPSKNSSATHQTNNNSHNT.

It belongs to the GLI C2H2-type zinc-finger protein family. As to expression, first detected at early gastrula (stage 10.25) in the dorsal lip and prospective neural plate. Also expressed in the mesoderm at early gastrulation, with expression strongest on the dorsal side. Mesodermal expression continues at stage 12 but is hardly detectable after stage 14. As gastrulation proceeds, expression decreases in the dorsal lip and increases in the prospective neural plate. At the neural plate stage (stage 14), expressed strongly in the prospective mesencephalon and anterior rhombencephalon, after which expression becomes stronger in the anterior neural folds. At early tailbud stage (stage 20), expression becomes restricted to the dorsal region of forebrain, midbrain and hindbrain, and weakly to the dorsal trunk. After mid-tailbud stage, expression decreases in the diencephalon, appears in the lateral mesoderm of the tailbud region and becomes restricted in the dorsal part of the neural tube.

The protein localises to the nucleus. The protein resides in the cytoplasm. Probably acts as a transcriptional activator. May bind to the minimal GLI-consensus sequence 5'-GGGTGGTC-3'. Can determine the ectodermal cell fate and promote the earliest step of neural and neural crest development. Involved in establishing left-right asymmetry in the embryo. This chain is Zinc finger protein ZIC 3 (zic3), found in Xenopus laevis (African clawed frog).